The following is a 475-amino-acid chain: tRNA modification GTPase MnmE (475 aa).

(6S)-5-formyl-5,6,7,8-tetrahydrofolate is bound by residues Arg24, Glu81, and Lys124. Residues 220–397 (GLSVVLAGQP…LRKELLRLVG (178 aa)) enclose the TrmE-type G domain. Asn230 contacts K(+). Residues 230-235 (NVGKSS), 249-255 (TPIAGTT), 274-277 (DTAG), and 378-380 (SAR) each bind GTP. Ser234 lines the Mg(2+) pocket. Thr249, Ile251, and Thr254 together coordinate K(+). Residue Thr255 coordinates Mg(2+). Lys475 lines the (6S)-5-formyl-5,6,7,8-tetrahydrofolate pocket.

It belongs to the TRAFAC class TrmE-Era-EngA-EngB-Septin-like GTPase superfamily. TrmE GTPase family. In terms of assembly, homodimer. Heterotetramer of two MnmE and two MnmG subunits. Requires K(+) as cofactor.

It is found in the cytoplasm. In terms of biological role, exhibits a very high intrinsic GTPase hydrolysis rate. Involved in the addition of a carboxymethylaminomethyl (cmnm) group at the wobble position (U34) of certain tRNAs, forming tRNA-cmnm(5)s(2)U34. This is tRNA modification GTPase MnmE from Cupriavidus pinatubonensis (strain JMP 134 / LMG 1197) (Cupriavidus necator (strain JMP 134)).